A 323-amino-acid polypeptide reads, in one-letter code: Melanocortin receptor 3 (323 aa).

At Met1–Gln37 the chain is on the extracellular side. N-linked (GlcNAc...) asparagine glycosylation is found at Asn2, Asn16, and Asn28. Residues Val38 to Val63 form a helical membrane-spanning segment. The Cytoplasmic portion of the chain corresponds to Val64–Phe75. A helical transmembrane segment spans residues Phe76–Val100. At Ile101–Asn118 the chain is on the extracellular side. The helical transmembrane segment at Ile119–Ile140 threads the bilayer. The Cytoplasmic portion of the chain corresponds to Asp141–Lys160. Residues Ala161–Ile181 traverse the membrane as a helical segment. At Tyr182–Lys186 the chain is on the extracellular side. A helical transmembrane segment spans residues Met187–Met210. At Phe211 to Thr245 the chain is on the cytoplasmic side. Residues Ile246 to Cys268 form a helical membrane-spanning segment. At Pro269–Tyr277 the chain is on the extracellular side. Residues Thr278–Phe301 form a helical membrane-spanning segment. At Arg302–Gly323 the chain is on the cytoplasmic side. Cys315 is lipidated: S-palmitoyl cysteine.

This sequence belongs to the G-protein coupled receptor 1 family. Brain.

The protein resides in the cell membrane. In terms of biological role, receptor for MSH (alpha, beta and gamma) and ACTH. This receptor is mediated by G proteins which activate adenylate cyclase. Required for expression of anticipatory patterns of activity and wakefulness during periods of limited nutrient availability and for the normal regulation of circadian clock activity in the brain. This is Melanocortin receptor 3 (Mc3r) from Mus musculus (Mouse).